A 270-amino-acid chain; its full sequence is Acyl-[acyl-carrier-protein]--UDP-N-acetylglucosamine O-acyltransferase (270 aa).

It belongs to the transferase hexapeptide repeat family. LpxA subfamily. As to quaternary structure, homotrimer.

It is found in the cytoplasm. It carries out the reaction a (3R)-hydroxyacyl-[ACP] + UDP-N-acetyl-alpha-D-glucosamine = a UDP-3-O-[(3R)-3-hydroxyacyl]-N-acetyl-alpha-D-glucosamine + holo-[ACP]. It participates in glycolipid biosynthesis; lipid IV(A) biosynthesis; lipid IV(A) from (3R)-3-hydroxytetradecanoyl-[acyl-carrier-protein] and UDP-N-acetyl-alpha-D-glucosamine: step 1/6. Involved in the biosynthesis of lipid A, a phosphorylated glycolipid that anchors the lipopolysaccharide to the outer membrane of the cell. This is Acyl-[acyl-carrier-protein]--UDP-N-acetylglucosamine O-acyltransferase from Helicobacter pylori (strain J99 / ATCC 700824) (Campylobacter pylori J99).